A 266-amino-acid polypeptide reads, in one-letter code: Type 1 encapsulin shell protein (266 aa).

It belongs to the encapsulin family. Family 1 subfamily. Homomultimeric. This encapsulin nanocompartment is formed by 60 subunits, and encloses one Dyp homohexamer; partially assembled 58-subunit compartments with and without cargo are also purified. May assemble the shell from dimers. Monomers form pentamers, which assemble to form hollow shells with pores 5-8 Angstroms in diameter where 3 pentamers meet.

The protein resides in the encapsulin nanocompartment. Its function is as follows. Shell component of a type 1 encapsulin nanocompartment. Assembles into proteinaceous shells 23-24 nm in diameter with 2-2.5 nm thick walls. Endogenous cargo protein DyP (dye-decolorizing peroxidase) is targeted to the interior via its C-terminal extension; only 1 DyP hexamer is incorporated into each shell. Empty shells can be isolated in the absence of cargo. Cargo encapsulation probably precedes assembly of the nanocompartment; may assemble or disassemble via dimers, subcomplexes with a distinct preference for even numbers of subunits are detected. Nanocompartments are stable against mechanical forces; loaded nanocompartments are less stable than empty ones. Nanocompartments are stable between pH 5-10; they aggregate at pH 9-10 and start to disassemble at pH 11. They are stable in 1M NaCl, 1 M MgCl(2) and 1M CaCl(2), unstable in 20% DMSO (dimethylsulfoxide) and are stable in 20% but not 40% ethanol. The chain is Type 1 encapsulin shell protein from Brevibacterium linens.